We begin with the raw amino-acid sequence, 208 residues long: MAKYNDSKCRICRREGGKLFLKGDRCYTDKCAFDRRPYAPGQHGRARKKNSDYAVQLREKQKVRRMYGLLEKQFHSYFVKADMSKGVTGSNLLSILERRLDNVIYRLGFANSRSQARQMVRHGIFTVNGRKATIPSIQVKVGDVIEVREKNRKMPVIAEAQEVIARRGCPSWLEADGPNFRGVVKALPQREDIQFPMSEQLIVELYSK.

The S4 RNA-binding domain maps to 98–161; sequence RRLDNVIYRL…RKMPVIAEAQ (64 aa).

This sequence belongs to the universal ribosomal protein uS4 family. Part of the 30S ribosomal subunit. Contacts protein S5. The interaction surface between S4 and S5 is involved in control of translational fidelity.

In terms of biological role, one of the primary rRNA binding proteins, it binds directly to 16S rRNA where it nucleates assembly of the body of the 30S subunit. With S5 and S12 plays an important role in translational accuracy. This is Small ribosomal subunit protein uS4 from Oleidesulfovibrio alaskensis (strain ATCC BAA-1058 / DSM 17464 / G20) (Desulfovibrio alaskensis).